Reading from the N-terminus, the 1414-residue chain is Alpha-(1-&gt;3)-arabinofuranosyltransferase (1414 aa).

9 helical membrane passes run 57-77 (YLFP…PGWV), 81-101 (LWWA…AEAL), 128-148 (AISS…PVIL), 167-187 (VALM…AAVI), 203-223 (AWWL…LLML), 273-293 (STTA…GLAL), 302-322 (LITM…GGLG), 352-372 (LPLA…GSAP), and 389-409 (VAVA…AWTA). Residues 687 to 845 (YPSDGADLVY…QYDASGFAHP (159 aa)) form the F5/8 type C domain. The next 4 membrane-spanning stretches (helical) occupy residues 1253 to 1273 (VGLI…LIPV), 1297 to 1317 (ALVA…GAAM), 1333 to 1353 (VWDN…GSVL), and 1364 to 1384 (YVGH…FLAA). The tract at residues 1393 to 1414 (PEPSEDGRSAKPEHTGASAHAG) is disordered. The span at 1394 to 1406 (EPSEDGRSAKPEH) shows a compositional bias: basic and acidic residues.

It localises to the membrane. The enzyme catalyses Adds an alpha-D-arabinofuranosyl group from trans,octacis-decaprenylphospho-beta-D-arabinofuranose at the 3-O-position of an alpha-(1-&gt;5)-arabinofuranan chain attached to a beta-(1-&gt;5)-galactofuranan chain.. Its pathway is cell wall biogenesis; cell wall polysaccharide biosynthesis. Involved in the biosynthesis of the arabinogalactan (AG) region of the mycolylarabinogalactan-peptidoglycan (mAGP) complex, an essential component of the mycobacterial cell wall. Catalyzes the addition of an arabinofuranosyl (Araf) residue from the sugar donor decaprenyl-phospho-arabinose (DPA) on the C-3 of an alpha-(1-&gt;5)-linked Araf from the arabinan backbone of AG. In Mycolicibacterium smegmatis (strain ATCC 700084 / mc(2)155) (Mycobacterium smegmatis), this protein is Alpha-(1-&gt;3)-arabinofuranosyltransferase (aftD).